A 374-amino-acid polypeptide reads, in one-letter code: Putative 12-oxophytodienoate reductase 5 (374 aa).

FMN contacts are provided by residues 30-32 (PMT), Ala-63, and Gln-105. 177–180 (HGAN) is a substrate binding site. Catalysis depends on Tyr-182, which acts as the Proton donor. An FMN-binding site is contributed by Arg-229. Substrate is bound at residue Arg-270. FMN-binding positions include Gly-300 and 321-322 (GR).

It belongs to the NADH:flavin oxidoreductase/NADH oxidase family. It depends on FMN as a cofactor.

Putative oxophytodienoate reductase that may be involved in the biosynthesis or metabolism of oxylipin signaling molecules. This chain is Putative 12-oxophytodienoate reductase 5 (OPR5), found in Oryza sativa subsp. japonica (Rice).